A 243-amino-acid polypeptide reads, in one-letter code: Carboxy-S-adenosyl-L-methionine synthase (243 aa).

Residues tyrosine 40, 65 to 67 (GCS), 90 to 91 (DN), 118 to 119 (DI), asparagine 133, and arginine 200 each bind S-adenosyl-L-methionine.

It belongs to the class I-like SAM-binding methyltransferase superfamily. Cx-SAM synthase family. Homodimer.

It catalyses the reaction prephenate + S-adenosyl-L-methionine = carboxy-S-adenosyl-L-methionine + 3-phenylpyruvate + H2O. Catalyzes the conversion of S-adenosyl-L-methionine (SAM) to carboxy-S-adenosyl-L-methionine (Cx-SAM). This chain is Carboxy-S-adenosyl-L-methionine synthase, found in Shewanella sediminis (strain HAW-EB3).